Consider the following 192-residue polypeptide: Small ribosomal subunit protein uS5 (192 aa).

The S5 DRBM domain maps to 20–83 (FVDRLVHINR…EAAKRGLIRV (64 aa)). The interval 165–192 (ARRGLKVSALQARRRDAEPGSADSADAA) is disordered.

It belongs to the universal ribosomal protein uS5 family. As to quaternary structure, part of the 30S ribosomal subunit. Contacts proteins S4 and S8.

Functionally, with S4 and S12 plays an important role in translational accuracy. In terms of biological role, located at the back of the 30S subunit body where it stabilizes the conformation of the head with respect to the body. This is Small ribosomal subunit protein uS5 from Methylobacterium sp. (strain 4-46).